The following is a 265-amino-acid chain: Leucine-rich repeat-containing protein Bf66946 (265 aa).

Positions 1–20 (MALRDIFLLSMAMTAVTVQA) are cleaved as a signal peptide. Intrachain disulfides connect cysteine 21-cysteine 27 and cysteine 25-cysteine 39. One can recognise an LRRNT domain in the interval 21–50 (CPSACKCTVSLYGEMVVACGGMGLTEIPED). 3 LRR repeats span residues 51–75 (IPHRAVYLVLKDNNITKITSYSFKG), 76–99 (LRNLQGIDLSNNKINHISSAALRH), and 100–123 (LGHLDDIDLSRNELTSVSEKLFDF). The N-linked (GlcNAc...) asparagine glycan is linked to asparagine 64. Residues 142–193 (NPWGCDCRMAWLAQELAGGSKTFGDRHMECATPAALAGRGLSEIPQTSFVCT) enclose the LRRCT domain. 2 disulfides stabilise this stretch: cysteine 146–cysteine 171 and cysteine 148–cysteine 192. A helical membrane pass occupies residues 220-240 (VAVVFGCITGLVTILLLVLTA).

It localises to the cell membrane. In terms of biological role, binds selectively to the Gram-positive bacteria S.aureus and S.pneumoniae. Does not adhere to the Gram-negative bacteria E.coli and S.enterica. Probably recognizes peptidoglycans expressed on the bacterial cell surface. This is Leucine-rich repeat-containing protein Bf66946 from Branchiostoma floridae (Florida lancelet).